A 344-amino-acid polypeptide reads, in one-letter code: Glucan endo-1,3-beta-glucosidase (344 aa).

The first 27 residues, Met-1–Ala-27, serve as a signal peptide directing secretion. The active-site Proton donor is the Glu-123. The active-site Nucleophile is the Glu-268.

The protein belongs to the glycosyl hydrolase 17 family.

It catalyses the reaction Hydrolysis of (1-&gt;3)-beta-D-glucosidic linkages in (1-&gt;3)-beta-D-glucans.. Its function is as follows. Implicated in the defense of plants against pathogens. In Vitis vinifera (Grape), this protein is Glucan endo-1,3-beta-glucosidase.